The chain runs to 121 residues: Small ribosomal subunit protein uS13 (121 aa).

The interval 97 to 121 (VRGQRTRTNARTRRGARKTVAGKKK) is disordered. A compositionally biased stretch (basic residues) spans 100-121 (QRTRTNARTRRGARKTVAGKKK).

This sequence belongs to the universal ribosomal protein uS13 family. As to quaternary structure, part of the 30S ribosomal subunit. Forms a loose heterodimer with protein S19. Forms two bridges to the 50S subunit in the 70S ribosome.

Its function is as follows. Located at the top of the head of the 30S subunit, it contacts several helices of the 16S rRNA. In the 70S ribosome it contacts the 23S rRNA (bridge B1a) and protein L5 of the 50S subunit (bridge B1b), connecting the 2 subunits; these bridges are implicated in subunit movement. Contacts the tRNAs in the A and P-sites. The polypeptide is Small ribosomal subunit protein uS13 (Synechococcus sp. (strain CC9311)).